The sequence spans 298 residues: Acetyl-coenzyme A carboxylase carboxyl transferase subunit beta (298 aa).

Positions 25-295 constitute a CoA carboxyltransferase N-terminal domain; that stretch reads VWAKCANCGE…SADHREHVVA (271 aa). 4 residues coordinate Zn(2+): cysteine 29, cysteine 32, cysteine 48, and cysteine 51. The segment at 29 to 51 adopts a C4-type zinc-finger fold; it reads CANCGELTYQKQFNDALKVCPKC.

Belongs to the AccD/PCCB family. Acetyl-CoA carboxylase is a heterohexamer composed of biotin carboxyl carrier protein (AccB), biotin carboxylase (AccC) and two subunits each of ACCase subunit alpha (AccA) and ACCase subunit beta (AccD). It depends on Zn(2+) as a cofactor.

The protein localises to the cytoplasm. It carries out the reaction N(6)-carboxybiotinyl-L-lysyl-[protein] + acetyl-CoA = N(6)-biotinyl-L-lysyl-[protein] + malonyl-CoA. It participates in lipid metabolism; malonyl-CoA biosynthesis; malonyl-CoA from acetyl-CoA: step 1/1. Component of the acetyl coenzyme A carboxylase (ACC) complex. Biotin carboxylase (BC) catalyzes the carboxylation of biotin on its carrier protein (BCCP) and then the CO(2) group is transferred by the transcarboxylase to acetyl-CoA to form malonyl-CoA. The sequence is that of Acetyl-coenzyme A carboxylase carboxyl transferase subunit beta from Herpetosiphon aurantiacus (strain ATCC 23779 / DSM 785 / 114-95).